A 525-amino-acid polypeptide reads, in one-letter code: Glutamyl-tRNA(Gln) amidotransferase subunit A, mitochondrial (525 aa).

Residues lysine 76 and serine 168 each act as charge relay system in the active site. Serine 192 functions as the Acyl-ester intermediate in the catalytic mechanism.

Belongs to the amidase family. GatA subfamily. Subunit of the heterotrimeric GatCAB amidotransferase (AdT) complex, composed of A (QRSL1), B (GATB) and C (GATC) subunits.

Its subcellular location is the mitochondrion. It catalyses the reaction L-glutamyl-tRNA(Gln) + L-glutamine + ATP + H2O = L-glutaminyl-tRNA(Gln) + L-glutamate + ADP + phosphate + H(+). In terms of biological role, allows the formation of correctly charged Gln-tRNA(Gln) through the transamidation of misacylated Glu-tRNA(Gln) in the mitochondria. The reaction takes place in the presence of glutamine and ATP through an activated gamma-phospho-Glu-tRNA(Gln). The polypeptide is Glutamyl-tRNA(Gln) amidotransferase subunit A, mitochondrial (Qrsl1) (Mus musculus (Mouse)).